The sequence spans 466 residues: Magnetosome-associated protein MamJ (466 aa).

Disordered regions lie at residues 1–23 and 60–80; these read MAKNRRDRGTDLPGDGDQKISTG and ANQGGLVETAQPPSAPIRSQD. The interval 1-24 is not required to restore magnetic response to deletion mutant; it reads MAKNRRDRGTDLPGDGDQKISTGP. The tract at residues 25–80 is required to restore magnetic response to deletion mutant; sequence EIVSVTVHPSPNLAAAAKPVQGDIWASLLESSPWSANQGGLVETAQPPSAPIRSQD. 2 Tandem repeat unit repeats span residues 81–168 and 169–256; these read PVPV…VEPE and PAPV…VEPE. Not required to restore magnetic response to deletion mutant regions lie at residues 81-256, 136-334, 333-374, and 432-466; these read PVPV…VEPE, ETDA…SQAE, AESV…AVEA, and VGSNVVAGTRRLAQTIEVSCGSCSSPKCDAEDKNK. 3 Glu-Pro-rich motif repeats span residues 145–164, 233–252, and 253–272; these read IEPEPALVEPVIEIEAEAAE and VEPEPAPVEPVIEIEAEAAE. 2 required to restore magnetic response to deletion mutant regions span residues 375–432 and 426–466; these read TRQP…GRLV and VKGG…DKNK.

This sequence belongs to the magnetosome MamJ protein family. As to quaternary structure, forms homooligomers. Interacts with MamK. Post-translationally, identified by N-terminal sequencing of a protein that is about 96 kDa in size. The protein runs anomalously on protein gels.

It is found in the magnetosome. Required for assembly of magnetosome chains. Regulates the dynamic behavior of MamK filaments. May connect magnetosomes to MamK filaments. Moves from the cell poles towards midcell; movement does not depend on the treadmilling ability of MamK, suggesting MamJ associates and disassociates continuously from the MamK filament. The polypeptide is Magnetosome-associated protein MamJ (Magnetospirillum gryphiswaldense (strain DSM 6361 / JCM 21280 / NBRC 15271 / MSR-1)).